Consider the following 293-residue polypeptide: Protein PET54 (293 aa).

The protein resides in the mitochondrion inner membrane. Its function is as follows. Activator of specific mitochondrial mRNAs. PET54 is involved in the excision of intron aI5-beta from pre-mRNA for cytochrome c oxidase I (COX1) and plays a role in promoting the translation of COX3. The sequence is that of Protein PET54 (PET54) from Saccharomyces cerevisiae (strain ATCC 204508 / S288c) (Baker's yeast).